A 148-amino-acid polypeptide reads, in one-letter code: Deoxyuridine 5'-triphosphate nucleotidohydrolase (148 aa).

Belongs to the dUTPase family. Requires Mg(2+) as cofactor.

It catalyses the reaction dUTP + H2O = dUMP + diphosphate + H(+). The protein operates within pyrimidine metabolism; dUMP biosynthesis; dUMP from dCTP (dUTP route): step 2/2. Its function is as follows. This enzyme decreases the intracellular concentration of dUTP so that uracil cannot be incorporated into viral progeny DNA. This activity is sufficient to exclude uracil from the DNA during phage replication. In the case of dUTPase mutant phages, the host dUTPase activity is not sufficient to exclude uracil from T5 DNA and uracil are incorporated, leading to decreased phage viability. The chain is Deoxyuridine 5'-triphosphate nucleotidohydrolase (DUT) from Escherichia coli (Enterobacteria phage T5).